Here is a 209-residue protein sequence, read N- to C-terminus: MFDPVDTYMNTLVPMVVEQTSRGERAYDIFSRLLKERIIFINGPIHDGMSHLIVAQLLHLEAENPNKEISIYINSPGGVVTSGLSIYDTMQYIKPKCSTLVIGQAASMGSVLLAGGEKGMRFSLPNSRIMVHQPSGGYQGQASDIMIHAAETQKLKDRLYDIYVKHTGQTKKAVEKALDRDNFMSPEEAKEWGHIDEIVESRSKGDDAE.

The Nucleophile role is filled by Ser-107. His-132 is an active-site residue.

This sequence belongs to the peptidase S14 family. Fourteen ClpP subunits assemble into 2 heptameric rings which stack back to back to give a disk-like structure with a central cavity, resembling the structure of eukaryotic proteasomes.

The protein resides in the cytoplasm. The catalysed reaction is Hydrolysis of proteins to small peptides in the presence of ATP and magnesium. alpha-casein is the usual test substrate. In the absence of ATP, only oligopeptides shorter than five residues are hydrolyzed (such as succinyl-Leu-Tyr-|-NHMec, and Leu-Tyr-Leu-|-Tyr-Trp, in which cleavage of the -Tyr-|-Leu- and -Tyr-|-Trp bonds also occurs).. In terms of biological role, cleaves peptides in various proteins in a process that requires ATP hydrolysis. Has a chymotrypsin-like activity. Plays a major role in the degradation of misfolded proteins. The polypeptide is ATP-dependent Clp protease proteolytic subunit (Ruegeria pomeroyi (strain ATCC 700808 / DSM 15171 / DSS-3) (Silicibacter pomeroyi)).